A 198-amino-acid polypeptide reads, in one-letter code: Recombination protein RecR (198 aa).

The C4-type zinc finger occupies 57-72 (CSVCGHITENDPCYIC). In terms of domain architecture, Toprim spans 80–175 (SVICVVEDDK…KVTRLAQGLS (96 aa)).

The protein belongs to the RecR family.

In terms of biological role, may play a role in DNA repair. It seems to be involved in an RecBC-independent recombinational process of DNA repair. It may act with RecF and RecO. In Staphylococcus aureus (strain JH1), this protein is Recombination protein RecR.